Consider the following 112-residue polypeptide: Large ribosomal subunit protein uL22 (112 aa).

It belongs to the universal ribosomal protein uL22 family. Part of the 50S ribosomal subunit.

Functionally, this protein binds specifically to 23S rRNA; its binding is stimulated by other ribosomal proteins, e.g. L4, L17, and L20. It is important during the early stages of 50S assembly. It makes multiple contacts with different domains of the 23S rRNA in the assembled 50S subunit and ribosome. In terms of biological role, the globular domain of the protein is located near the polypeptide exit tunnel on the outside of the subunit, while an extended beta-hairpin is found that lines the wall of the exit tunnel in the center of the 70S ribosome. The protein is Large ribosomal subunit protein uL22 of Sorangium cellulosum (strain So ce56) (Polyangium cellulosum (strain So ce56)).